The primary structure comprises 319 residues: Acetyl-coenzyme A carboxylase carboxyl transferase subunit alpha (319 aa).

Residues 36 to 293 enclose the CoA carboxyltransferase C-terminal domain; sequence EVERLKTKLE…HDAFLSELDR (258 aa).

It belongs to the AccA family. In terms of assembly, acetyl-CoA carboxylase is a heterohexamer composed of biotin carboxyl carrier protein (AccB), biotin carboxylase (AccC) and two subunits each of ACCase subunit alpha (AccA) and ACCase subunit beta (AccD).

It is found in the cytoplasm. The enzyme catalyses N(6)-carboxybiotinyl-L-lysyl-[protein] + acetyl-CoA = N(6)-biotinyl-L-lysyl-[protein] + malonyl-CoA. Its pathway is lipid metabolism; malonyl-CoA biosynthesis; malonyl-CoA from acetyl-CoA: step 1/1. Its function is as follows. Component of the acetyl coenzyme A carboxylase (ACC) complex. First, biotin carboxylase catalyzes the carboxylation of biotin on its carrier protein (BCCP) and then the CO(2) group is transferred by the carboxyltransferase to acetyl-CoA to form malonyl-CoA. In Dichelobacter nodosus (strain VCS1703A), this protein is Acetyl-coenzyme A carboxylase carboxyl transferase subunit alpha.